A 336-amino-acid chain; its full sequence is Phosphoribosylformylglycinamidine cyclo-ligase (336 aa).

The protein belongs to the AIR synthase family.

Its subcellular location is the cytoplasm. It catalyses the reaction 2-formamido-N(1)-(5-O-phospho-beta-D-ribosyl)acetamidine + ATP = 5-amino-1-(5-phospho-beta-D-ribosyl)imidazole + ADP + phosphate + H(+). It participates in purine metabolism; IMP biosynthesis via de novo pathway; 5-amino-1-(5-phospho-D-ribosyl)imidazole from N(2)-formyl-N(1)-(5-phospho-D-ribosyl)glycinamide: step 2/2. The chain is Phosphoribosylformylglycinamidine cyclo-ligase from Thermoanaerobacter sp. (strain X514).